A 446-amino-acid polypeptide reads, in one-letter code: Phosphoglucosamine mutase (446 aa).

The active-site Phosphoserine intermediate is the Ser101. The Mg(2+) site is built by Ser101, Asp240, Asp242, and Asp244. Position 101 is a phosphoserine (Ser101).

The protein belongs to the phosphohexose mutase family. Mg(2+) is required as a cofactor. Activated by phosphorylation.

It catalyses the reaction alpha-D-glucosamine 1-phosphate = D-glucosamine 6-phosphate. Its function is as follows. Catalyzes the conversion of glucosamine-6-phosphate to glucosamine-1-phosphate. This chain is Phosphoglucosamine mutase, found in Pseudomonas putida (strain ATCC 700007 / DSM 6899 / JCM 31910 / BCRC 17059 / LMG 24140 / F1).